A 577-amino-acid chain; its full sequence is CDPK-related kinase 7 (577 aa).

The tract at residues Met-1 to Phe-38 is disordered. Gly-2 carries N-myristoyl glycine lipidation. Residues Tyr-124 to Leu-386 enclose the Protein kinase domain. ATP-binding positions include Val-130–Thr-138 and Lys-156. Catalysis depends on Asp-252, which acts as the Proton acceptor. The residue at position 292 (Ser-292) is a Phosphoserine. A Phosphoserine; by CPK1, CPK10 and CPK34 modification is found at Ser-334. An autoinhibitory domain region spans residues Glu-391–Leu-421. Positions Ser-410–Leu-430 are calmodulin binding (CaMBD). 4 EF-hand domains span residues Pro-428–Ala-464, Thr-465–Leu-500, Glu-501–Val-540, and His-543–Arg-572. Positions 443, 445, 447, 484, 489, 520, 522, 529, 554, and 556 each coordinate Ca(2+). At Ser-558 the chain carries Phosphoserine.

The protein belongs to the protein kinase superfamily. Ser/Thr protein kinase family. CDPK subfamily. Binds calmodulin (CaM) in a calcium-dependent manner. Autophosphorylated.

The protein localises to the membrane. It catalyses the reaction L-seryl-[protein] + ATP = O-phospho-L-seryl-[protein] + ADP + H(+). The catalysed reaction is L-threonyl-[protein] + ATP = O-phospho-L-threonyl-[protein] + ADP + H(+). With respect to regulation, activated by calcium and calmodulin. Autophosphorylation may play an important role in the regulation of the kinase activity. Its function is as follows. May play a role in signal transduction pathways that involve calcium as a second messenger. The sequence is that of CDPK-related kinase 7 (CRK7) from Arabidopsis thaliana (Mouse-ear cress).